The sequence spans 686 residues: Protein MxiA (686 aa).

The next 6 helical transmembrane spans lie at 28-52 (LIIP…ILVF), 105-129 (FVIG…FIVI), 197-216 (AIAG…SVGM), 232-256 (ILTI…GFIV), 274-292 (IFGN…LAIG), and 299-315 (FFVF…LFYY).

Belongs to the FHIPEP (flagella/HR/invasion proteins export pore) family.

Its subcellular location is the cell inner membrane. In terms of biological role, necessary for the secretion of IPA invasins. The sequence is that of Protein MxiA (mxiA) from Shigella flexneri.